We begin with the raw amino-acid sequence, 137 residues long: uncharacterized protein (137 aa).

Positions 4–118 (YEGNCLCKAI…CIDDKPDCYD (115 aa)) constitute a CENP-V/GFA domain. The Zn(2+) site is built by Cys8, Cys10, Cys27, Cys29, Cys32, Cys71, and Cys74.

Belongs to the Gfa family. It depends on Zn(2+) as a cofactor.

It is found in the cytoplasm. The protein resides in the nucleus. This is an uncharacterized protein from Schizosaccharomyces pombe (strain 972 / ATCC 24843) (Fission yeast).